The sequence spans 153 residues: Flagellar assembly factor FliW (153 aa).

It belongs to the FliW family. As to quaternary structure, interacts with translational regulator CsrA and flagellin(s).

The protein localises to the cytoplasm. Functionally, acts as an anti-CsrA protein, binds CsrA and prevents it from repressing translation of its target genes, one of which is flagellin. Binds to flagellin and participates in the assembly of the flagellum. This chain is Flagellar assembly factor FliW, found in Heliobacterium modesticaldum (strain ATCC 51547 / Ice1).